Here is a 252-residue protein sequence, read N- to C-terminus: Type I iodothyronine deiodinase (252 aa).

Over 1–17 (MESLLQTIKLMLRYIQK) the chain is Extracellular. The chain crosses the membrane as a helical; Signal-anchor for type III membrane protein span at residues 18-38 (ALILFFLFLYVVVGKVLMFLF). At 39–252 (PQTMASVLKS…EVCSVLEKKK (214 aa)) the chain is on the cytoplasmic side. The active site involves selenocysteine 130. Position 130 (selenocysteine 130) is a non-standard amino acid, selenocysteine.

It belongs to the iodothyronine deiodinase family. As to quaternary structure, predominantly monomer. Can form homodimers but homodimerization is not essential for enzyme activity.

It localises to the cell membrane. It is found in the endoplasmic reticulum membrane. The protein localises to the basolateral cell membrane. It carries out the reaction 3,3',5-triiodo-L-thyronine + iodide + A + H(+) = L-thyroxine + AH2. It catalyses the reaction 3,3',5'-triiodo-L-thyronine + iodide + A + H(+) = L-thyroxine + AH2. The catalysed reaction is 3,3'-diiodo-L-thyronine + iodide + A + H(+) = 3,3',5'-triiodo-L-thyronine + AH2. The enzyme catalyses 3,3'-diiodo-L-thyronine + iodide + A + H(+) = 3,3',5-triiodo-L-thyronine + AH2. It carries out the reaction 3'-iodo-L-thyronine + iodide + A + H(+) = 3',5'-diiodo-L-thyronine + AH2. It catalyses the reaction 3-iodo-L-thyronine + iodide + A + H(+) = 3,5-diiodo-L-thyronine + AH2. The catalysed reaction is 3-iodo-L-thyronine + iodide + A + H(+) = 3,3'-diiodo-L-thyronine + AH2. The enzyme catalyses 3,3'-diiodothyronamine + iodide + A + H(+) = 3,3',5'-triiodothyronamine + AH2. It carries out the reaction 3'-iodothyronamine + iodide + A + H(+) = 3',5'-diiodothyronamine + AH2. It catalyses the reaction 3-iodothyronamine + iodide + A + H(+) = 3,3'-diiodothyronamine + AH2. The catalysed reaction is 3,3'-diiodothyronamine + iodide + A + H(+) = 3,3',5-triiodothyronamine + AH2. The enzyme catalyses 3-iodothyronamine + iodide + A + H(+) = 3,5-diiodothyronamine + AH2. It carries out the reaction 3,3'-diiodo-L-thyronine sulfate + iodide + A + H(+) = 3,3',5'-triiodo-L-thyronine sulfate + AH2. It catalyses the reaction 3,3',5'-triiodo-L-thyronine sulfate + iodide + A + H(+) = L-thyroxine sulfate + AH2. The catalysed reaction is 3,3'-diiodo-L-thyronine sulfate + iodide + A + H(+) = 3,3',5-triiodo-L-thyronine sulfate + AH2. Lacks sensitivity to 6-n-propylthiouracil. Its function is as follows. Plays a crucial role in the metabolism of thyroid hormones (TH) and has specific roles in TH activation and inactivation by deiodination. Catalyzes the deiodination of L-thyroxine (T4) to 3,5,3'-triiodothyronine (T3) and 3,3',5'-triiodothyronine (rT3) to 3,3'-diiodothyronine (3,3'-T2) via outer-ring deiodination (ORD). Catalyzes the deiodiantion of T4 to rT3 and T3 to 3,3'-T2 via inner-ring deiodination (IRD). Catalyzes the deiodination of 3',5'-diiodothyronine (3',5'-T2) to 3'-monoiodothyronine (3'-T1) via ORD. Catalyzes the deiodination of 3,5-diiodothyronine (3,5-T2) to 3-monoiodothyronine (3-T1) and 3,3'-T2 to 3-T1 via IRD. Catalyzes the phenolic ring deiodinations of 3,3',5'-triiodothyronamine, 3',5'-diiodothyronamine and 3,3'-diiodothyronamine as well as tyrosyl ring deiodinations of 3,5,3'-triiodothyronamine and 3,5-diiodothyronamine. Catalyzes the deiodination of L-thyroxine sulfate and 3,3',5-triiodo-L-thyronine sulfate via IRD and of 3,3',5'-triiodo-L-thyronine sulfate via ORD. The polypeptide is Type I iodothyronine deiodinase (dio1) (Xenopus laevis (African clawed frog)).